A 571-amino-acid chain; its full sequence is Phosphoenolpyruvate-protein phosphotransferase (571 aa).

The Tele-phosphohistidine intermediate role is filled by His-207. Positions 312 and 348 each coordinate phosphoenolpyruvate. Mg(2+)-binding residues include Glu-435 and Asp-459. Phosphoenolpyruvate contacts are provided by residues 458–459 and Arg-469; that span reads ND. Residue Cys-506 is the Proton donor of the active site.

The protein belongs to the PEP-utilizing enzyme family. Homodimer. Requires Mg(2+) as cofactor.

The protein localises to the cytoplasm. The catalysed reaction is L-histidyl-[protein] + phosphoenolpyruvate = N(pros)-phospho-L-histidyl-[protein] + pyruvate. Functionally, general (non sugar-specific) component of the phosphoenolpyruvate-dependent sugar phosphotransferase system (sugar PTS). This major carbohydrate active-transport system catalyzes the phosphorylation of incoming sugar substrates concomitantly with their translocation across the cell membrane. Enzyme I transfers the phosphoryl group from phosphoenolpyruvate (PEP) to the phosphoryl carrier protein (HPr). The sequence is that of Phosphoenolpyruvate-protein phosphotransferase (ptsI) from Chlamydia trachomatis serovar D (strain ATCC VR-885 / DSM 19411 / UW-3/Cx).